Consider the following 355-residue polypeptide: Apyrase apy-1 (355 aa).

At 1–6 the chain is on the cytoplasmic side; the sequence is MTQESN. Residues 7 to 29 traverse the membrane as a helical; Signal-anchor for type II membrane protein segment; it reads SNFFNFLLFGFVTAIAFYSGTQF. Residue Asn30 is glycosylated (N-linked (GlcNAc...) asparagine). Topologically, residues 30–355 are lumenal; the sequence is NKSSEQEEHI…PYKYEGIAFA (326 aa). Ca(2+) contacts are provided by Ser119, Glu166, and Glu235. Asn291 carries an N-linked (GlcNAc...) asparagine glycan. Glu350 lines the Ca(2+) pocket.

Belongs to the apyrase family. Requires Ca(2+) as cofactor.

The protein localises to the endomembrane system. It catalyses the reaction a ribonucleoside 5'-diphosphate + H2O = a ribonucleoside 5'-phosphate + phosphate + H(+). Hydrolyzes UDP and to a lesser extent GDP. By preventing the accumulation of NDP, may promote the reglucosylation of incompletely folded glycoproteins in the endoplasmic reticulum following the unfolded protein response. The protein is Apyrase apy-1 of Caenorhabditis elegans.